Reading from the N-terminus, the 116-residue chain is Large ribosomal subunit protein bL19 (116 aa).

The protein belongs to the bacterial ribosomal protein bL19 family.

In terms of biological role, this protein is located at the 30S-50S ribosomal subunit interface and may play a role in the structure and function of the aminoacyl-tRNA binding site. The polypeptide is Large ribosomal subunit protein bL19 (Azotobacter vinelandii (strain DJ / ATCC BAA-1303)).